A 651-amino-acid polypeptide reads, in one-letter code: Protein numb homolog (651 aa).

The PID domain occupies 33-193; it reads RTGKCSFPVK…ASRTTFTREG (161 aa). Threonine 102 is subject to Phosphothreonine; by AAK1. Serine 194 is subject to Phosphoserine. A disordered region spans residues 228–255; the sequence is SSVAPGNTAPSPSSPTSPTSDATTSLEM. Over residues 235–252 the composition is skewed to low complexity; sequence TAPSPSSPTSPTSDATTS. The residue at position 243 (threonine 243) is a Phosphothreonine. A Phosphoserine modification is found at serine 244. Serine 276 and serine 295 each carry phosphoserine; by CaMK1. 2 disordered regions span residues 419–483 and 623–651; these read QSSG…SPFQ and LENK…EIEL. Serine 425 is modified (phosphoserine). The residue at position 436 (threonine 436) is a Phosphothreonine. Over residues 436 to 449 the composition is skewed to basic and acidic residues; sequence TPSEADRWLEEVSK. Phosphoserine is present on serine 438. The span at 453–466 shows a compositional bias: low complexity; sequence AQQPQASAAPLQPV. Polar residues predominate over residues 630 to 644; that stretch reads RTNPSPTNPFSSDLQ. Serine 634 carries the phosphoserine modification.

As to quaternary structure, interacts with SIAH1. Interacts with LNX. Interacts with CDH1. Interacts with TFAP2A and TFAP2B. Interacts with RALBP1 in a complex also containing EPN1 and TFAP2A during interphase and mitosis. Interacts with AAK1. May interact with DUOXA1. Post-translationally, phosphorylated on Ser-276 and Ser-295 by CaMK1. Isoform 1 and isoform 2 are ubiquitinated by LNX leading to their subsequent proteasomal degradation. Ubiquitinated; mediated by SIAH1 and leading to its subsequent proteasomal degradation.

Its subcellular location is the cell membrane. It is found in the endosome membrane. Functionally, regulates clathrin-mediated receptor endocytosis. Plays a role in the process of neurogenesis. Required throughout embryonic neurogenesis to maintain neural progenitor cells, also called radial glial cells (RGCs), by allowing their daughter cells to choose progenitor over neuronal cell fate. Not required for the proliferation of neural progenitor cells before the onset of neurogenesis. Also involved postnatally in the subventricular zone (SVZ) neurogenesis by regulating SVZ neuroblasts survival and ependymal wall integrity. May also mediate local repair of brain ventricular wall damage. The polypeptide is Protein numb homolog (Homo sapiens (Human)).